The following is a 177-amino-acid chain: MDLPGPIHDFLLVFLGLGFIMGGLGVVLLTNPIFSAFSLGLVLVCTSLFYTPSNSHFVAAAQLLIYVGAINVLIIFAVMFMNGSEYYSDFHLWTVGDGVTSLVCTSIFVSLITTIPDTSWYGIVWTTRSNQIIEQDLINNSQQIGIHLSTDFFLPFELISIILLVALIGAISMARQY.

5 helical membrane passes run 10 to 30 (FLLV…VLLT), 32 to 52 (PIFS…FYTP), 61 to 81 (AQLL…VMFM), 92 to 112 (LWTV…VSLI), and 152 to 172 (FFLP…GAIS).

The protein belongs to the complex I subunit 6 family. In terms of assembly, NDH is composed of at least 16 different subunits, 5 of which are encoded in the nucleus.

The protein resides in the plastid. Its subcellular location is the chloroplast thylakoid membrane. The catalysed reaction is a plastoquinone + NADH + (n+1) H(+)(in) = a plastoquinol + NAD(+) + n H(+)(out). It catalyses the reaction a plastoquinone + NADPH + (n+1) H(+)(in) = a plastoquinol + NADP(+) + n H(+)(out). NDH shuttles electrons from NAD(P)H:plastoquinone, via FMN and iron-sulfur (Fe-S) centers, to quinones in the photosynthetic chain and possibly in a chloroplast respiratory chain. The immediate electron acceptor for the enzyme in this species is believed to be plastoquinone. Couples the redox reaction to proton translocation, and thus conserves the redox energy in a proton gradient. The polypeptide is NAD(P)H-quinone oxidoreductase subunit 6, chloroplastic (ndhG) (Ranunculus macranthus (Large buttercup)).